The chain runs to 358 residues: uncharacterized protein (358 aa).

Low complexity predominate over residues 70-88; that stretch reads RPAATAGTTPATGASGSAR. The segment at 70–93 is disordered; the sequence is RPAATAGTTPATGASGSARPTDAA. Positions 178–353 constitute a Macro domain; sequence PSTCRGDNVS…AFSAAIQAGE (176 aa).

This is an uncharacterized protein from Mycobacterium bovis (strain ATCC BAA-935 / AF2122/97).